Here is a 355-residue protein sequence, read N- to C-terminus: UDP-3-O-acylglucosamine N-acyltransferase (355 aa).

The active-site Proton acceptor is the H258.

This sequence belongs to the transferase hexapeptide repeat family. LpxD subfamily. In terms of assembly, homotrimer.

The catalysed reaction is a UDP-3-O-[(3R)-3-hydroxyacyl]-alpha-D-glucosamine + a (3R)-hydroxyacyl-[ACP] = a UDP-2-N,3-O-bis[(3R)-3-hydroxyacyl]-alpha-D-glucosamine + holo-[ACP] + H(+). Its pathway is bacterial outer membrane biogenesis; LPS lipid A biosynthesis. In terms of biological role, catalyzes the N-acylation of UDP-3-O-acylglucosamine using 3-hydroxyacyl-ACP as the acyl donor. Is involved in the biosynthesis of lipid A, a phosphorylated glycolipid that anchors the lipopolysaccharide to the outer membrane of the cell. This is UDP-3-O-acylglucosamine N-acyltransferase from Bradyrhizobium diazoefficiens (strain JCM 10833 / BCRC 13528 / IAM 13628 / NBRC 14792 / USDA 110).